A 288-amino-acid polypeptide reads, in one-letter code: Solute carrier family 25 member 45 (288 aa).

3 Solcar repeats span residues 1–83 (MPVE…TLLA), 97–191 (PSYT…LCRQ), and 199–286 (PSSA…LLRL). 6 consecutive transmembrane segments (helical) span residues 6-26 (FVAG…FDTV), 58-78 (GMSF…GVYS), 102-122 (IFIA…PFDL), 166-186 (GSWA…VTYE), 202-222 (ATVL…ATPF), and 266-286 (SARA…LLRL).

The protein belongs to the mitochondrial carrier (TC 2.A.29) family. As to expression, widely expressed, with highest levels in testis, liver and kidney and low levels in brain, including cortex, cerebellum, hippocampus and hypothalamus, and heart.

Its subcellular location is the mitochondrion inner membrane. In Mus musculus (Mouse), this protein is Solute carrier family 25 member 45 (Slc25a45).